Here is a 223-residue protein sequence, read N- to C-terminus: 2-C-methyl-D-erythritol 4-phosphate cytidylyltransferase (223 aa).

It belongs to the IspD/TarI cytidylyltransferase family. IspD subfamily.

The catalysed reaction is 2-C-methyl-D-erythritol 4-phosphate + CTP + H(+) = 4-CDP-2-C-methyl-D-erythritol + diphosphate. It functions in the pathway isoprenoid biosynthesis; isopentenyl diphosphate biosynthesis via DXP pathway; isopentenyl diphosphate from 1-deoxy-D-xylulose 5-phosphate: step 2/6. Functionally, catalyzes the formation of 4-diphosphocytidyl-2-C-methyl-D-erythritol from CTP and 2-C-methyl-D-erythritol 4-phosphate (MEP). This Prochlorococcus marinus (strain MIT 9301) protein is 2-C-methyl-D-erythritol 4-phosphate cytidylyltransferase.